Here is an 870-residue protein sequence, read N- to C-terminus: Dynamin-2 (870 aa).

The Dynamin-type G domain occupies 28 to 294; that stretch reads HLDLPQIAVV…LTNHIRESLP (267 aa). The G1 motif stretch occupies residues 38 to 45; it reads GGQSAGKS. Positions 41, 43, 44, 45, 46, 59, and 60 each coordinate GDP. Positions 64–66 are G2 motif; it reads VTR. The interval 136–139 is G3 motif; that stretch reads DLPG. The tract at residues 205–208 is G4 motif; it reads TKLD. Positions 206, 208, and 211 each coordinate GDP. Tyr-231 carries the phosphotyrosine modification. Positions 235-238 are G5 motif; the sequence is VNRS. GDP contacts are provided by Asn-236, Arg-237, and Gln-239. Lys-299 is modified (N6-acetyllysine). A PH domain is found at 519-625; it reads LVIRRGWLTI…WKASFLRAGV (107 aa). Tyr-597 is subject to Phosphotyrosine. Lys-598 carries the post-translational modification N6-acetyllysine. Residues 653-744 enclose the GED domain; sequence VETIRNLVDS…IIGDISTSTV (92 aa). Positions 741 to 870 are disordered; that stretch reads TSTVSTPVPP…IRPAEPSLLD (130 aa). The residue at position 755 (Thr-755) is a Phosphothreonine. A compositionally biased stretch (polar residues) spans 756–767; the sequence is WLQNTSGHSPTP. Ser-764 bears the Phosphoserine; by CDK1 mark. Pro residues predominate over residues 826-846; the sequence is SAPPQIPSRPARIPPGIPPGV. Positions 847–864 are enriched in low complexity; the sequence is PSRRAPAAPSRPTIIRPA.

This sequence belongs to the TRAFAC class dynamin-like GTPase superfamily. Dynamin/Fzo/YdjA family. As to quaternary structure, oligomerizes into a helical polymer that self-assembles around the vesicle membrane, when associated to the menbrane through lipid binding. Interacts with SHANK1 and SHANK2. Interacts with SNX9. Interacts (via C-terminal proline-rich domain (PRD)) with SNX18 (via SH3 domain); this interaction regulates ATG9A and ATG16L1 trafficking from recycling endosomes to sites of autophagosome formation. Interacts with SNX33 (via SH3 domain). Interacts with MYO1E (via SH3 domain). Interacts with PSTPIP1 (via SH3 domain). Interacts with CTNND2. Interacts (via C-terminal proline-rich domain (PRD)) with BIN1 (via SH3 domain); this interaction allows the recruitment of DNM2 to the membrane tubules and inhibits self-assembly-stimulated GTPase activity on the membrane. Interacts with GABARAP, GABARAPL1 and GABARAPL2. Interacts with MAP1LC3B (the lipidate and non-lipidated LC3 form); this interaction mediates recycling endosome scission leading to autophagosome release. Interacts with ITSN1. Interacts (via C-terminal proline-rich domain (PRD)) with SH3BP4 (via SH3 domain); this interaction controls the GTPase activity and is prevented by EGFR-induced tyrosine phosphorylation of either DNM2 or SH3BP4. Interacts with MYOF. May interact with PIK3C3. May be a component of a complex composed of RAB5A (in GDP-bound form), DYN2 and PIK3C3. Interacts with SDC4; this interaction is markedly enhanced at focal ahesion site upon induction of focal adhesions and stress-fiber formation. Interacts with ACTN1. Interacts with CTTN; this interaction stimulates the intrinsic GTPase activity of DNM2 and stabilizes the association of DNM2 and actin filaments; in addition this interaction is stimulated by ligand binding to the receptor, leading to the recruitment of the DNM2-CTTN complex to the sequestered receptor-ligand complex to its internalization. Interacts with NOSTRIN (via SH3 domain); this interaction allows the recruitment of NOS3 to dynamin-positive structures. Interacts with TUBG1; this interaction may participate in centrosome cohesion. Phosphorylation at Ser-848 by GSK3-alpha relieves the inhibition of BIN1 and promotes endocytosis. Phosphorylation at Ser-764 by CDK1 is greatly increased upon mitotic entry. It regulates cytokinesis downstream of calcineurin, and does not affect clathrin-mediated endocytosis. Dephosphorylated by calcineurin/PP2 during cytokinesis in a Ca(2+)- and calmodulin-dependent manner. Phosphorylated on tyrosine residues by EGFR. Phosphorylated on tyrosine residues after activation of SRC. As to expression, expressed in most tissues during embryonic development, including the peripheral nervous system although no expression is evident in skeletal muscle or heart.

It is found in the cytoplasm. The protein localises to the cytoskeleton. Its subcellular location is the cytoplasmic vesicle. It localises to the clathrin-coated vesicle. The protein resides in the cell projection. It is found in the uropodium. The protein localises to the endosome. Its subcellular location is the microtubule organizing center. It localises to the centrosome. The protein resides in the centriole. It is found in the recycling endosome. The protein localises to the phagocytic cup. Its subcellular location is the phagosome membrane. It localises to the podosome. The protein resides in the cell junction. It is found in the postsynaptic density. The protein localises to the synapse. Its subcellular location is the synaptosome. It localises to the midbody. The protein resides in the membrane. It is found in the clathrin-coated pit. It carries out the reaction GTP + H2O = GDP + phosphate + H(+). Functionally, catalyzes the hydrolysis of GTP and utilizes this energy to mediate vesicle scission at plasma membrane during endocytosis and filament remodeling at many actin structures during organization of the actin cytoskeleton. Plays an important role in vesicular trafficking processes, namely clathrin-mediated endocytosis (CME), exocytic and clathrin-coated vesicle from the trans-Golgi network, and PDGF stimulated macropinocytosis. During vesicular trafficking process, associates to the membrane, through lipid binding, and self-assembles into ring-like structure through oligomerization to form a helical polymer around the vesicle membrane and leading to vesicle scission. Plays a role in organization of the actin cytoskeleton by mediating arrangement of stress fibers and actin bundles in podocytes. During organization of the actin cytoskeleton, self-assembles into ring-like structure that directly bundles actin filaments to form typical membrane tubules decorated with dynamin spiral polymers. Self-assembly increases GTPase activity and the GTP hydrolysis causes the rapid depolymerization of dynamin spiral polymers, and results in dispersion of actin bundles. Remodels, through its interaction with CTTN, bundled actin filaments in a GTPase-dependent manner and plays a role in orchestrating the global actomyosin cytoskeleton. The interaction with CTTN stabilizes the interaction of DNM2 and actin filaments and stimulates the intrinsic GTPase activity that results in actin filament-barbed ends and increases the sensitivity of filaments in bundles to the actin depolymerizing factor, CFL1. Plays a role in the autophagy process, by participating in the formation of ATG9A vesicles destined for the autophagosomes through its interaction with SNX18, by mediating recycling endosome scission leading to autophagosome release through MAP1LC3B interaction. Also regulates maturation of apoptotic cell corpse-containing phagosomes by recruiting PIK3C3 to the phagosome membrane. Also plays a role in cytokinesis. May participate in centrosome cohesion through its interaction with TUBG1. Plays a role in the regulation of neuron morphology, axon growth and formation of neuronal growth cones. Involved in membrane tubulation. The protein is Dynamin-2 of Mus musculus (Mouse).